A 143-amino-acid polypeptide reads, in one-letter code: Ponticulin (143 aa).

An N-terminal signal peptide occupies residues 1-22; sequence MLVLRNLLALVTLALLFTLSSA. An N-linked (GlcNAc...) asparagine glycan is attached at Asn-111. A lipid anchor (GPI-like-anchor amidated serine) is attached at Ser-118. A propeptide spans 119-143 (removed in mature form); the sequence is SSGSTVMIGLASSLLFAFATLLALF.

This sequence belongs to the ponticulin family. As to quaternary structure, monomer. Post-translationally, disulfide bond(s) stabilize the native, actin-binding conformation of ponticulin. The GPI-like-anchor contains a phosphoceramide group, rather than a phosphatidyl group.

It localises to the cell membrane. Binds F-actin and nucleates actin assembly. Major high affinity link between the plasma membrane and the cortical actin network. In Dictyostelium discoideum (Social amoeba), this protein is Ponticulin (ponA).